Consider the following 323-residue polypeptide: Ribosomal RNA small subunit methyltransferase H (323 aa).

S-adenosyl-L-methionine contacts are provided by residues 44 to 46, Asp-64, Tyr-91, Asp-112, and Gln-119; that span reads AGH.

This sequence belongs to the methyltransferase superfamily. RsmH family.

The protein localises to the cytoplasm. The enzyme catalyses cytidine(1402) in 16S rRNA + S-adenosyl-L-methionine = N(4)-methylcytidine(1402) in 16S rRNA + S-adenosyl-L-homocysteine + H(+). Functionally, specifically methylates the N4 position of cytidine in position 1402 (C1402) of 16S rRNA. This chain is Ribosomal RNA small subunit methyltransferase H, found in Nitratidesulfovibrio vulgaris (strain ATCC 29579 / DSM 644 / CCUG 34227 / NCIMB 8303 / VKM B-1760 / Hildenborough) (Desulfovibrio vulgaris).